The sequence spans 151 residues: Protein INO4 (151 aa).

In terms of domain architecture, bHLH spans 45-97; that stretch reads QIRINHVSSEKKRRELERAIFDELVAVVPDLQPQESRSELIIYLKSLSYLSWL. Residues 112-137 are disordered; sequence HEAKTGSSSSSDPVQEQNGNIRDLVP. The span at 116-131 shows a compositional bias: polar residues; the sequence is TGSSSSSDPVQEQNGN.

Efficient DNA binding requires dimerization with another bHLH protein.

The protein resides in the nucleus. In terms of biological role, transcriptional activator of phospholipid synthetic genes (such as INO1, CHO1/PSS, CHO2/PEM1, OPI3/PEM2, etc.). The chain is Protein INO4 (INO4) from Saccharomyces cerevisiae (strain ATCC 204508 / S288c) (Baker's yeast).